The sequence spans 96 residues: Aspartyl/glutamyl-tRNA(Asn/Gln) amidotransferase subunit C (96 aa).

Belongs to the GatC family. In terms of assembly, heterotrimer of A, B and C subunits.

The enzyme catalyses L-glutamyl-tRNA(Gln) + L-glutamine + ATP + H2O = L-glutaminyl-tRNA(Gln) + L-glutamate + ADP + phosphate + H(+). The catalysed reaction is L-aspartyl-tRNA(Asn) + L-glutamine + ATP + H2O = L-asparaginyl-tRNA(Asn) + L-glutamate + ADP + phosphate + 2 H(+). Its function is as follows. Allows the formation of correctly charged Asn-tRNA(Asn) or Gln-tRNA(Gln) through the transamidation of misacylated Asp-tRNA(Asn) or Glu-tRNA(Gln) in organisms which lack either or both of asparaginyl-tRNA or glutaminyl-tRNA synthetases. The reaction takes place in the presence of glutamine and ATP through an activated phospho-Asp-tRNA(Asn) or phospho-Glu-tRNA(Gln). The sequence is that of Aspartyl/glutamyl-tRNA(Asn/Gln) amidotransferase subunit C from Leptospira interrogans serogroup Icterohaemorrhagiae serovar copenhageni (strain Fiocruz L1-130).